The sequence spans 504 residues: Maturase K (504 aa).

The protein belongs to the intron maturase 2 family. MatK subfamily.

The protein resides in the plastid. Its subcellular location is the chloroplast. In terms of biological role, usually encoded in the trnK tRNA gene intron. Probably assists in splicing its own and other chloroplast group II introns. The chain is Maturase K from Ochroma pyramidale (Balsa).